Consider the following 480-residue polypeptide: Speriolin (480 aa).

The segment at 1–76 (MSLLTSYEGL…HQGVFLPPAS (76 aa)) is necessary for targeting to centrosomes. The stretch at 2–45 (SLLTSYEGLRHQIERLVRENEELKKLVRLIRENQELKSAIKTQA) forms a coiled coil. Disordered regions lie at residues 252 to 297 (INNI…SRVM) and 305 to 324 (VEME…DNPR).

The protein belongs to the speriolin family. Found in a complex with CDC20, CDC27 and TUBG1. Interacts with CDC20. In terms of tissue distribution, expressed in testis. Expressed in pachyten spermatocytes, spermatids and epididymal sperm (at protein level).

Its subcellular location is the cytoplasm. The protein resides in the cytoskeleton. It is found in the microtubule organizing center. The protein localises to the centrosome. The polypeptide is Speriolin (Spatc1) (Mus musculus (Mouse)).